The chain runs to 344 residues: Lipase chaperone (344 aa).

Residues 14–34 (AVVYGVVGLAAIAGVAMWSGA) traverse the membrane as a helical segment. The interval 39 to 78 (ATGASGESPEASVAGGSVTAPPQAAVPASTGLPPSLAGSS) is disordered.

Belongs to the lipase chaperone family.

It localises to the cell inner membrane. Functionally, may be involved in the folding of the extracellular lipase during its passage through the periplasm. This is Lipase chaperone (lifO) from Pseudomonas sp. (strain KWI-56).